Here is a 1350-residue protein sequence, read N- to C-terminus: Ubiquitin carboxyl-terminal hydrolase 47 (1350 aa).

The tract at residues 111–138 is disordered; it reads DGEQPQLTSDESGTADSSGLDDSSQEKF. The segment covering 115–132 has biased composition (polar residues); it reads PQLTSDESGTADSSGLDD. The 376-residue stretch at 173–548 folds into the USP domain; sequence VGLVNQAMTC…NAYMLMYRLK (376 aa). The active-site Nucleophile is the Cys182. The interval 409-437 is disordered; sequence EDEKSPQTDSCTDSGAENEGSCHSDQMSN. Residues 415–437 show a composition bias toward polar residues; sequence QTDSCTDSGAENEGSCHSDQMSN. The active-site Proton acceptor is the His487. Disordered regions lie at residues 815 to 836 and 859 to 1000; these read HPRP…PQED and SLQQ…ESGK. Over residues 859–877 the composition is skewed to polar residues; sequence SLQQHQDGGNGDSSKSTEG. Basic and acidic residues predominate over residues 916–926; the sequence is PEERSDSDVNN. The span at 929–945 shows a compositional bias: low complexity; it reads STSSVDSDILSSSHSSD. Basic and acidic residues predominate over residues 973–982; it reads KANDGKKETW. The span at 983–996 shows a compositional bias: acidic residues; sequence DTAEEDSGTDSEYD.

The protein belongs to the peptidase C19 family. USP47 subfamily.

The protein localises to the cytoplasm. It carries out the reaction Thiol-dependent hydrolysis of ester, thioester, amide, peptide and isopeptide bonds formed by the C-terminal Gly of ubiquitin (a 76-residue protein attached to proteins as an intracellular targeting signal).. Ubiquitin-specific protease that specifically deubiquitinates monoubiquitinated DNA polymerase beta (polb), stabilizing polb thereby playing a role in base-excision repair (BER). The chain is Ubiquitin carboxyl-terminal hydrolase 47 (usp47) from Xenopus laevis (African clawed frog).